The following is a 330-amino-acid chain: Glycerol-3-phosphate dehydrogenase [NAD(P)+] (330 aa).

Residues S10, W11, R31, and K105 each coordinate NADPH. Sn-glycerol 3-phosphate-binding residues include K105, G135, and S137. A139 contributes to the NADPH binding site. Sn-glycerol 3-phosphate contacts are provided by K190, D243, S253, R254, and N255. K190 serves as the catalytic Proton acceptor. R254 lines the NADPH pocket. NADPH-binding residues include V278 and E280.

This sequence belongs to the NAD-dependent glycerol-3-phosphate dehydrogenase family.

It is found in the cytoplasm. The catalysed reaction is sn-glycerol 3-phosphate + NAD(+) = dihydroxyacetone phosphate + NADH + H(+). The enzyme catalyses sn-glycerol 3-phosphate + NADP(+) = dihydroxyacetone phosphate + NADPH + H(+). It participates in membrane lipid metabolism; glycerophospholipid metabolism. Catalyzes the reduction of the glycolytic intermediate dihydroxyacetone phosphate (DHAP) to sn-glycerol 3-phosphate (G3P), the key precursor for phospholipid synthesis. This Oleidesulfovibrio alaskensis (strain ATCC BAA-1058 / DSM 17464 / G20) (Desulfovibrio alaskensis) protein is Glycerol-3-phosphate dehydrogenase [NAD(P)+].